The sequence spans 60 residues: LKCNKLVPLFYKTCPAGKNLCYKMFMVSNKTVPVKRGCIDVCPKNSLVLKYVCCNTDRCN.

4 disulfides stabilise this stretch: cysteine 3–cysteine 21, cysteine 14–cysteine 38, cysteine 42–cysteine 53, and cysteine 54–cysteine 59.

This sequence belongs to the three-finger toxin family. Short-chain subfamily. Type IA cytotoxin sub-subfamily. Monomer in solution; Homodimer and oligomer in the presence of negatively charged lipids forming a pore with a size ranging between 20 and 30 Angstroms. In terms of tissue distribution, expressed by the venom gland.

It localises to the secreted. The protein resides in the target cell membrane. In terms of biological role, produces complete blockade of auricular contraction, which is irreversible at high concentrations. Induces apoptosis in leukemic cells. Possesses anti-arthritic and anti-inflammatory potential. This chain is Cytotoxin 1, found in Naja kaouthia (Monocled cobra).